A 441-amino-acid chain; its full sequence is Chromosome partition protein MukF (441 aa).

The tract at residues 208-236 is leucine-zipper; that stretch reads LDETSGNLRELQDTLNAAGDKLQAQLLRI.

It belongs to the MukF family. In terms of assembly, interacts, and probably forms a ternary complex, with MukE and MukB via its C-terminal region. The complex formation is stimulated by calcium or magnesium. It is required for an interaction between MukE and MukB.

The protein resides in the cytoplasm. It localises to the nucleoid. Functionally, involved in chromosome condensation, segregation and cell cycle progression. May participate in facilitating chromosome segregation by condensation DNA from both sides of a centrally located replisome during cell division. Not required for mini-F plasmid partitioning. Probably acts via its interaction with MukB and MukE. Overexpression results in anucleate cells. It has a calcium binding activity. This is Chromosome partition protein MukF from Pasteurella multocida (strain Pm70).